The following is a 284-amino-acid chain: Phosphoribosylaminoimidazole-succinocarboxamide synthase (284 aa).

Belongs to the SAICAR synthetase family.

The catalysed reaction is 5-amino-1-(5-phospho-D-ribosyl)imidazole-4-carboxylate + L-aspartate + ATP = (2S)-2-[5-amino-1-(5-phospho-beta-D-ribosyl)imidazole-4-carboxamido]succinate + ADP + phosphate + 2 H(+). Its pathway is purine metabolism; IMP biosynthesis via de novo pathway; 5-amino-1-(5-phospho-D-ribosyl)imidazole-4-carboxamide from 5-amino-1-(5-phospho-D-ribosyl)imidazole-4-carboxylate: step 1/2. This chain is Phosphoribosylaminoimidazole-succinocarboxamide synthase, found in Chromobacterium violaceum (strain ATCC 12472 / DSM 30191 / JCM 1249 / CCUG 213 / NBRC 12614 / NCIMB 9131 / NCTC 9757 / MK).